A 588-amino-acid polypeptide reads, in one-letter code: Sulfite reductase [NADPH] hemoprotein beta-component (588 aa).

[4Fe-4S] cluster-binding residues include C442, C448, C487, and C491. Residue C491 participates in siroheme binding.

The protein belongs to the nitrite and sulfite reductase 4Fe-4S domain family. In terms of assembly, alpha(8)-beta(8). The alpha component is a flavoprotein, the beta component is a hemoprotein. Siroheme is required as a cofactor. [4Fe-4S] cluster serves as cofactor.

It carries out the reaction hydrogen sulfide + 3 NADP(+) + 3 H2O = sulfite + 3 NADPH + 4 H(+). The protein operates within sulfur metabolism; hydrogen sulfide biosynthesis; hydrogen sulfide from sulfite (NADPH route): step 1/1. Its function is as follows. Component of the sulfite reductase complex that catalyzes the 6-electron reduction of sulfite to sulfide. This is one of several activities required for the biosynthesis of L-cysteine from sulfate. The sequence is that of Sulfite reductase [NADPH] hemoprotein beta-component from Actinobacillus pleuropneumoniae serotype 7 (strain AP76).